The following is a 753-amino-acid chain: 5-methyltetrahydropteroyltriglutamate--homocysteine methyltransferase (753 aa).

Residues 17 to 20 (RELK) and lysine 117 each bind 5-methyltetrahydropteroyltri-L-glutamate. L-homocysteine-binding positions include 431–433 (IGS) and glutamate 484. L-methionine contacts are provided by residues 431–433 (IGS) and glutamate 484. 5-methyltetrahydropteroyltri-L-glutamate-binding positions include 515–516 (RC) and tryptophan 561. Residue aspartate 599 coordinates L-homocysteine. Position 599 (aspartate 599) interacts with L-methionine. Glutamate 605 is a 5-methyltetrahydropteroyltri-L-glutamate binding site. Histidine 641, cysteine 643, and glutamate 665 together coordinate Zn(2+). Histidine 694 (proton donor) is an active-site residue. Cysteine 726 serves as a coordination point for Zn(2+).

Belongs to the vitamin-B12 independent methionine synthase family. Requires Zn(2+) as cofactor.

The catalysed reaction is 5-methyltetrahydropteroyltri-L-glutamate + L-homocysteine = tetrahydropteroyltri-L-glutamate + L-methionine. It functions in the pathway amino-acid biosynthesis; L-methionine biosynthesis via de novo pathway; L-methionine from L-homocysteine (MetE route): step 1/1. Functionally, catalyzes the transfer of a methyl group from 5-methyltetrahydrofolate to homocysteine resulting in methionine formation. This Escherichia fergusonii (strain ATCC 35469 / DSM 13698 / CCUG 18766 / IAM 14443 / JCM 21226 / LMG 7866 / NBRC 102419 / NCTC 12128 / CDC 0568-73) protein is 5-methyltetrahydropteroyltriglutamate--homocysteine methyltransferase.